We begin with the raw amino-acid sequence, 92 residues long: UPF0223 protein SMU_1141c (92 aa).

This sequence belongs to the UPF0223 family.

The chain is UPF0223 protein SMU_1141c from Streptococcus mutans serotype c (strain ATCC 700610 / UA159).